A 363-amino-acid polypeptide reads, in one-letter code: Inositol-3-phosphate synthase (363 aa).

6 residues coordinate NAD(+): D68, A127, Y147, S190, D225, and K238.

The protein belongs to the myo-inositol 1-phosphate synthase family. In terms of assembly, monomer. NAD(+) serves as cofactor.

The enzyme catalyses D-glucose 6-phosphate = 1D-myo-inositol 3-phosphate. The protein operates within polyol metabolism; myo-inositol biosynthesis; myo-inositol from D-glucose 6-phosphate: step 1/2. Its function is as follows. Key enzyme in myo-inositol biosynthesis pathway that catalyzes the conversion of glucose 6-phosphate to 1D-myo-inositol 3-phosphate in a NAD-dependent manner. Plays a key role in oxidative stress resistance as its product is the precursor of the protective antioxidant mycothiol (MSH or AcCys-GlcN-Ins). The chain is Inositol-3-phosphate synthase from Corynebacterium glutamicum (strain ATCC 13032 / DSM 20300 / JCM 1318 / BCRC 11384 / CCUG 27702 / LMG 3730 / NBRC 12168 / NCIMB 10025 / NRRL B-2784 / 534).